Reading from the N-terminus, the 190-residue chain is Voltage-dependent calcium channel gamma-like subunit (190 aa).

Helical transmembrane passes span 25-45, 96-116, 131-151, and 155-175; these read FIRTLIITCVALAVVLSSVSI, ALAVVAAIFGLEFLMVSQLCE, LLVSFVLSSGGLLGFVILLRN, and LIGFTLMFWCEFTASFLLFLN.

It belongs to the PMP-22/EMP/MP20 family. CACNG subfamily. The L-type calcium channel is composed of five subunits: alpha-1, alpha-2/delta, beta and gamma.

It is found in the membrane. In terms of biological role, thought to stabilize the calcium channel in an inactivated (closed) state. Modulates calcium current when coexpressed with CACNA1G. In Homo sapiens (Human), this protein is Voltage-dependent calcium channel gamma-like subunit.